Here is a 238-residue protein sequence, read N- to C-terminus: Zinc-finger homeodomain protein 11 (238 aa).

The ZF-HD dimerization-type; degenerate zinc-finger motif lies at 12 to 59 (YRECMRNHAAKLGTYANDGCCEYTPDDGHPAGLLCAACGCHRNFHRKD). The segment at residues 119 to 188 (RRRTRTKFTE…NHKAGGGGGG (70 aa)) is a DNA-binding region (homeobox). The span at 183–200 (GGGGGGGGSGGPGAGGGA) shows a compositional bias: gly residues. Positions 183-238 (GGGGGGGGSGGPGAGGGAQTSSSTTRGGGDVGVGLSPAMGGDGEDDEEVRGSEMCM) are disordered.

In terms of assembly, homo- and heterodimer with other ZFHD proteins.

The protein localises to the nucleus. Putative transcription factor. This Oryza sativa subsp. indica (Rice) protein is Zinc-finger homeodomain protein 11 (ZHD11).